The sequence spans 457 residues: Bifunctional protein GlmU (457 aa).

Residues 1-227 (MTQLSVVILA…FMEVEGANNR (227 aa)) are pyrophosphorylase. UDP-N-acetyl-alpha-D-glucosamine-binding positions include 9–12 (LAAG), lysine 23, glutamine 74, 79–80 (GT), 101–103 (YGD), glycine 138, glutamate 152, asparagine 167, and asparagine 225. Aspartate 103 is a Mg(2+) binding site. Asparagine 225 contacts Mg(2+). The interval 228-248 (LQLAALERFYQKTQAEKLLLA) is linker. Positions 249–457 (GVRLIDPARF…QRPTKKKIAD (209 aa)) are N-acetyltransferase. 2 residues coordinate UDP-N-acetyl-alpha-D-glucosamine: arginine 331 and lysine 349. Residue histidine 361 is the Proton acceptor of the active site. Residues tyrosine 364 and asparagine 375 each contribute to the UDP-N-acetyl-alpha-D-glucosamine site. Residues alanine 378, 384–385 (NY), serine 403, alanine 421, and arginine 438 contribute to the acetyl-CoA site.

In the N-terminal section; belongs to the N-acetylglucosamine-1-phosphate uridyltransferase family. It in the C-terminal section; belongs to the transferase hexapeptide repeat family. Homotrimer. Mg(2+) serves as cofactor.

It is found in the cytoplasm. It carries out the reaction alpha-D-glucosamine 1-phosphate + acetyl-CoA = N-acetyl-alpha-D-glucosamine 1-phosphate + CoA + H(+). It catalyses the reaction N-acetyl-alpha-D-glucosamine 1-phosphate + UTP + H(+) = UDP-N-acetyl-alpha-D-glucosamine + diphosphate. The protein operates within nucleotide-sugar biosynthesis; UDP-N-acetyl-alpha-D-glucosamine biosynthesis; N-acetyl-alpha-D-glucosamine 1-phosphate from alpha-D-glucosamine 6-phosphate (route II): step 2/2. It functions in the pathway nucleotide-sugar biosynthesis; UDP-N-acetyl-alpha-D-glucosamine biosynthesis; UDP-N-acetyl-alpha-D-glucosamine from N-acetyl-alpha-D-glucosamine 1-phosphate: step 1/1. Its pathway is bacterial outer membrane biogenesis; LPS lipid A biosynthesis. In terms of biological role, catalyzes the last two sequential reactions in the de novo biosynthetic pathway for UDP-N-acetylglucosamine (UDP-GlcNAc). The C-terminal domain catalyzes the transfer of acetyl group from acetyl coenzyme A to glucosamine-1-phosphate (GlcN-1-P) to produce N-acetylglucosamine-1-phosphate (GlcNAc-1-P), which is converted into UDP-GlcNAc by the transfer of uridine 5-monophosphate (from uridine 5-triphosphate), a reaction catalyzed by the N-terminal domain. The protein is Bifunctional protein GlmU of Actinobacillus pleuropneumoniae serotype 5b (strain L20).